The sequence spans 591 residues: Cytidine monophosphate-N-acetylneuraminic acid hydroxylase (591 aa).

Residues 12-110 (LEAEDVRNLK…AVLSETDGSL (99 aa)) form the Rieske domain. The [2Fe-2S] cluster site is built by Cys-52, His-54, Cys-73, and His-76.

It belongs to the CMP-Neu5Ac hydroxylase family. The cofactor is [2Fe-2S] cluster.

It localises to the cytoplasm. It catalyses the reaction CMP-N-acetyl-beta-neuraminate + 2 Fe(II)-[cytochrome b5] + O2 + 2 H(+) = CMP-N-glycoloyl-beta-neuraminate + 2 Fe(III)-[cytochrome b5] + H2O. Its pathway is amino-sugar metabolism; N-acetylneuraminate metabolism. Sialic acids are components of carbohydrate chains of glycoconjugates and are involved in cell-cell recognition and cell-pathogen interactions. Catalyzes the conversion of CMP-N-acetylneuraminic acid (CMP-Neu5Ac) into its hydroxylated derivative CMP-N-glycolylneuraminic acid (CMP-Neu5Gc), a sialic acid abundantly expressed at the surface of many cells. In Danio rerio (Zebrafish), this protein is Cytidine monophosphate-N-acetylneuraminic acid hydroxylase (cmah).